A 272-amino-acid polypeptide reads, in one-letter code: Putative phosphoenolpyruvate synthase regulatory protein (272 aa).

Residue 151–158 coordinates ADP; that stretch reads GVSRSGKT.

The protein belongs to the pyruvate, phosphate/water dikinase regulatory protein family. PSRP subfamily.

It carries out the reaction [pyruvate, water dikinase] + ADP = [pyruvate, water dikinase]-phosphate + AMP + H(+). The enzyme catalyses [pyruvate, water dikinase]-phosphate + phosphate + H(+) = [pyruvate, water dikinase] + diphosphate. Its function is as follows. Bifunctional serine/threonine kinase and phosphorylase involved in the regulation of the phosphoenolpyruvate synthase (PEPS) by catalyzing its phosphorylation/dephosphorylation. In Desulfotalea psychrophila (strain LSv54 / DSM 12343), this protein is Putative phosphoenolpyruvate synthase regulatory protein.